The following is a 310-amino-acid chain: 4-hydroxyproline 2-epimerase (310 aa).

C88 (proton acceptor) is an active-site residue. Residues 89–90, H208, and D232 each bind substrate; that span reads GH. The Proton donor role is filled by C236. Substrate is bound at residue 237-238; that stretch reads GT.

This sequence belongs to the proline racemase family.

The enzyme catalyses trans-4-hydroxy-L-proline = cis-4-hydroxy-D-proline. Catalyzes the epimerization of trans-4-hydroxy-L-proline (t4LHyp) to cis-4-hydroxy-D-proline (c4DHyp). Is likely involved in a degradation pathway that converts t4LHyp to alpha-ketoglutarate. Displays no proline racemase activity. The chain is 4-hydroxyproline 2-epimerase from Acinetobacter baumannii (strain AYE).